We begin with the raw amino-acid sequence, 22 residues long: Caerin-3.4 (22 aa).

Lys22 bears the Lysine amide mark.

In terms of tissue distribution, expressed by the skin parotoid and/or rostral glands.

The protein resides in the secreted. Functionally, antibacterial peptide, that adopts an alpha helical conformation which can disrupt bacterial membranes. Each caerin displays a different antimicrobial specificity. In Ranoidea caerulea (Green tree frog), this protein is Caerin-3.4.